We begin with the raw amino-acid sequence, 202 residues long: Regulator of G-protein signaling 16 (202 aa).

2 S-palmitoyl cysteine lipidation sites follow: cysteine 2 and cysteine 12. The 117-residue stretch at 65-181 (SFDLLLSSKN…LKSPAYRDLA (117 aa)) folds into the RGS domain. Residue tyrosine 168 is modified to Phosphotyrosine; by EGFR. Tyrosine 177 bears the Phosphotyrosine mark. The segment at 183-202 (QATAASASPSSSSPAEPLHT) is disordered.

In terms of assembly, interacts with GNAI1 and GNAQ. Interacts with GNAI3, GNAI3 and GNAO1. In terms of processing, palmitoylated on Cys-2 and/or Cys-12. Post-translationally, phosphorylated. Phosphorylation at Tyr-168 by EGFR enhances GTPase accelerating (GAP) activity toward GNAI1.

Its subcellular location is the membrane. Its function is as follows. Regulates G protein-coupled receptor signaling cascades. Inhibits signal transduction by increasing the GTPase activity of G protein alpha subunits, thereby driving them into their inactive GDP-bound form. Plays an important role in the phototransduction cascade by regulating the lifetime and effective concentration of activated transducin alpha. May regulate extra and intracellular mitogenic signals. This Bos taurus (Bovine) protein is Regulator of G-protein signaling 16 (RGS16).